We begin with the raw amino-acid sequence, 196 residues long: Mitochondrial intermembrane space cysteine motif-containing protein MIX23 (196 aa).

The Cx14C motif motif lies at 99-114; that stretch reads CEKEAAEMKNETDQQC. The Cx13C motif signature appears at 178-192; sequence CEQNNDYLKEFTQFC.

This sequence belongs to the MIX23 family.

The protein localises to the mitochondrion intermembrane space. Regulator of the mitochondrial protein import machinery that is localized in the mitochondrial intermembrane space (IMS) and facilitates the transport of proteins from the cytosol into the mitochondrial matrix. Not essential for mitochondrial protein import but induced and required when mitochondrial import is compromised. Stimulates or stabilizes the translocation into the mitochondria of proteins such as OXA1, ATP1 and COX12. This chain is Mitochondrial intermembrane space cysteine motif-containing protein MIX23, found in Saccharomyces cerevisiae (strain ATCC 204508 / S288c) (Baker's yeast).